The following is a 47-amino-acid chain: MQVLSSLRSAKNRHPDCKIVRRRGRVYVICKSNPRFKAVQGGTHKKR.

This sequence belongs to the bacterial ribosomal protein bL36 family.

In Yersinia enterocolitica serotype O:8 / biotype 1B (strain NCTC 13174 / 8081), this protein is Large ribosomal subunit protein bL36A.